A 147-amino-acid chain; its full sequence is Hemoglobin subunit epsilon (147 aa).

The Globin domain maps to 3-147; sequence HFTAEEKSTI…VATALAHKYH (145 aa). 2 positions are modified to phosphoserine: Ser-14 and Ser-51. Positions 64 and 93 each coordinate heme b.

It belongs to the globin family. As to quaternary structure, heterotetramer of two alpha chains and two epsilon chains in early embryonic hemoglobin Gower-2; two zeta chains and two epsilon chains in early embryonic hemoglobin Gower-1. In terms of tissue distribution, red blood cells.

Functionally, the epsilon chain is a beta-type chain of early mammalian embryonic hemoglobin. This is Hemoglobin subunit epsilon (HBE1) from Microcebus murinus (Gray mouse lemur).